Consider the following 513-residue polypeptide: Zinc finger CCCH-type with G patch domain-containing protein (513 aa).

The C3H1-type zinc finger occupies 155–178; the sequence is PCSYYLEGECRFDEAKCRFSHGAL. The span at 252–261 shows a compositional bias: acidic residues; that stretch reads DQDEDDELSS. The segment at 252–283 is disordered; the sequence is DQDEDDELSSEESNSSMNDNSSDEAESDMDDL. Low complexity predominate over residues 262 to 271; it reads EESNSSMNDN. Residues 272 to 283 show a composition bias toward acidic residues; it reads SSDEAESDMDDL. The G-patch domain maps to 312 to 358; that stretch reads TRGIGSKLMEKMGYIHGTGLGSDGRGIVTPVSAQILPQGRSLDACME. Positions 478–495 are enriched in polar residues; sequence VQMQSHKQELATLQAQER. The tract at residues 478-513 is disordered; sequence VQMQSHKQELATLQAQERSLSKEQQTRKSKNKMFEF. Over residues 496 to 513 the composition is skewed to basic and acidic residues; sequence SLSKEQQTRKSKNKMFEF.

The protein resides in the nucleus. Functionally, transcription repressor. In Drosophila melanogaster (Fruit fly), this protein is Zinc finger CCCH-type with G patch domain-containing protein.